The sequence spans 394 residues: Elongation factor Tu 1 (394 aa).

Residues 10–204 (KPHVNVGTIG…HLDTYIPEPE (195 aa)) form the tr-type G domain. Residues 19–26 (GHVDHGKT) are G1. 19-26 (GHVDHGKT) serves as a coordination point for GTP. Thr26 is a binding site for Mg(2+). Residues 60 to 64 (GITIN) are G2. The G3 stretch occupies residues 81–84 (DCPG). GTP is bound by residues 81-85 (DCPGH) and 136-139 (NKCD). Residues 136–139 (NKCD) are G4. Residues 174-176 (SAL) are G5.

It belongs to the TRAFAC class translation factor GTPase superfamily. Classic translation factor GTPase family. EF-Tu/EF-1A subfamily. In terms of assembly, monomer.

The protein resides in the cytoplasm. It carries out the reaction GTP + H2O = GDP + phosphate + H(+). GTP hydrolase that promotes the GTP-dependent binding of aminoacyl-tRNA to the A-site of ribosomes during protein biosynthesis. This chain is Elongation factor Tu 1, found in Haemophilus influenzae (strain 86-028NP).